Here is a 343-residue protein sequence, read N- to C-terminus: C-X-C chemokine receptor type 6 (343 aa).

The Extracellular segment spans residues 1 to 33 (MAEYDHYEDDGFLNSFNDSSQEEHQDFLQFRKV). N17 is a glycosylation site (N-linked (GlcNAc...) asparagine). Residues 34-60 (FLPCMYLVVFVCGLVGNSLVLVISIFY) traverse the membrane as a helical segment. The Cytoplasmic portion of the chain corresponds to 61–69 (HKLQSLTDV). The helical transmembrane segment at 70–90 (FLVNLPLADLVFVCTLPFWTY) threads the bilayer. Over 91–104 (AGIHEWIFGQVMCK) the chain is Extracellular. A disulfide bond links C103 and C181. The helical transmembrane segment at 105–126 (TLLGVYTINFYTSMLILTCITV) threads the bilayer. Topologically, residues 127-144 (DRFIVVVKATKAYNQQAK) are cytoplasmic. A helical membrane pass occupies residues 145–165 (RMTWGKVICLLIWVISLLVSL). Residues 166 to 188 (PQIIYGNVFNLDKLICGYHDEEI) are Extracellular-facing. The chain crosses the membrane as a helical span at residues 189 to 216 (STVVLATQMTLGFFLPLLAMIVCYSVII). At 217-232 (KTLLHAGGFQKHRSLK) the chain is on the cytoplasmic side. A helical transmembrane segment spans residues 233 to 260 (IIFLVMAVFLLTQTPFNLVKLIRSTRWE). The Extracellular portion of the chain corresponds to 261-276 (YYAMTSFHYTIIVTEA). A helical transmembrane segment spans residues 277–294 (IAYLRACLNPVLYAFVSL). The Cytoplasmic portion of the chain corresponds to 295–343 (KFRKNFWKLVKDIGCLPYLGVSHQWKSSEDNSKTFSASHNVEATSMFQL).

The protein belongs to the G-protein coupled receptor 1 family.

Its subcellular location is the cell membrane. In terms of biological role, receptor for the C-X-C chemokine CXCL16. Used as a coreceptor by SIVs and by strains of HIV-2 and m-tropic HIV-1. In Macaca fascicularis (Crab-eating macaque), this protein is C-X-C chemokine receptor type 6 (CXCR6).